A 503-amino-acid polypeptide reads, in one-letter code: ATP synthase subunit alpha (503 aa).

An ATP-binding site is contributed by 169–176; that stretch reads GDRQTGKT.

It belongs to the ATPase alpha/beta chains family. In terms of assembly, F-type ATPases have 2 components, CF(1) - the catalytic core - and CF(0) - the membrane proton channel. CF(1) has five subunits: alpha(3), beta(3), gamma(1), delta(1), epsilon(1). CF(0) has three main subunits: a(1), b(2) and c(9-12). The alpha and beta chains form an alternating ring which encloses part of the gamma chain. CF(1) is attached to CF(0) by a central stalk formed by the gamma and epsilon chains, while a peripheral stalk is formed by the delta and b chains.

The protein localises to the cell membrane. The catalysed reaction is ATP + H2O + 4 H(+)(in) = ADP + phosphate + 5 H(+)(out). Produces ATP from ADP in the presence of a proton gradient across the membrane. The alpha chain is a regulatory subunit. This chain is ATP synthase subunit alpha, found in Macrococcus caseolyticus (strain JCSC5402) (Macrococcoides caseolyticum).